A 150-amino-acid chain; its full sequence is 6,7-dimethyl-8-ribityllumazine synthase (150 aa).

Residues F11, 43 to 45 (TYE), and 67 to 69 (AVI) each bind 5-amino-6-(D-ribitylamino)uracil. 72 to 73 (AT) serves as a coordination point for (2S)-2-hydroxy-3-oxobutyl phosphate. Residue H75 is the Proton donor of the active site. L100 is a binding site for 5-amino-6-(D-ribitylamino)uracil. R115 provides a ligand contact to (2S)-2-hydroxy-3-oxobutyl phosphate.

It belongs to the DMRL synthase family.

It catalyses the reaction (2S)-2-hydroxy-3-oxobutyl phosphate + 5-amino-6-(D-ribitylamino)uracil = 6,7-dimethyl-8-(1-D-ribityl)lumazine + phosphate + 2 H2O + H(+). The protein operates within cofactor biosynthesis; riboflavin biosynthesis; riboflavin from 2-hydroxy-3-oxobutyl phosphate and 5-amino-6-(D-ribitylamino)uracil: step 1/2. Functionally, catalyzes the formation of 6,7-dimethyl-8-ribityllumazine by condensation of 5-amino-6-(D-ribitylamino)uracil with 3,4-dihydroxy-2-butanone 4-phosphate. This is the penultimate step in the biosynthesis of riboflavin. The sequence is that of 6,7-dimethyl-8-ribityllumazine synthase from Staphylothermus marinus (strain ATCC 43588 / DSM 3639 / JCM 9404 / F1).